A 264-amino-acid chain; its full sequence is Thiazole synthase (264 aa).

Residue K106 is the Schiff-base intermediate with DXP of the active site. 1-deoxy-D-xylulose 5-phosphate contacts are provided by residues G167, 193-194, and 215-216; these read AG and NT.

Belongs to the ThiG family. As to quaternary structure, homotetramer. Forms heterodimers with either ThiH or ThiS.

It is found in the cytoplasm. It carries out the reaction [ThiS sulfur-carrier protein]-C-terminal-Gly-aminoethanethioate + 2-iminoacetate + 1-deoxy-D-xylulose 5-phosphate = [ThiS sulfur-carrier protein]-C-terminal Gly-Gly + 2-[(2R,5Z)-2-carboxy-4-methylthiazol-5(2H)-ylidene]ethyl phosphate + 2 H2O + H(+). It participates in cofactor biosynthesis; thiamine diphosphate biosynthesis. Its function is as follows. Catalyzes the rearrangement of 1-deoxy-D-xylulose 5-phosphate (DXP) to produce the thiazole phosphate moiety of thiamine. Sulfur is provided by the thiocarboxylate moiety of the carrier protein ThiS. In vitro, sulfur can be provided by H(2)S. This chain is Thiazole synthase, found in Xanthomonas euvesicatoria pv. vesicatoria (strain 85-10) (Xanthomonas campestris pv. vesicatoria).